Reading from the N-terminus, the 104-residue chain is uncharacterized protein (104 aa).

2 consecutive transmembrane segments (helical) span residues Ile47–Leu67 and Val72–Ala92.

To M.leprae ML1584.

It is found in the cell membrane. This is an uncharacterized protein from Mycobacterium tuberculosis (strain CDC 1551 / Oshkosh).